Consider the following 199-residue polypeptide: Recombination protein RecR (199 aa).

The segment at 57 to 72 (CSQCHNITDTDPCQIC) adopts a C4-type zinc-finger fold. In terms of domain architecture, Toprim spans 80-176 (TTICVVQESR…KVTRLAHGLP (97 aa)).

Belongs to the RecR family.

In terms of biological role, may play a role in DNA repair. It seems to be involved in an RecBC-independent recombinational process of DNA repair. It may act with RecF and RecO. This chain is Recombination protein RecR, found in Shouchella clausii (strain KSM-K16) (Alkalihalobacillus clausii).